The primary structure comprises 125 residues: Small ribosomal subunit protein uS12 (125 aa).

Position 89 is a 3-methylthioaspartic acid (Asp89).

Belongs to the universal ribosomal protein uS12 family. As to quaternary structure, part of the 30S ribosomal subunit. Contacts proteins S8 and S17. May interact with IF1 in the 30S initiation complex.

Functionally, with S4 and S5 plays an important role in translational accuracy. Its function is as follows. Interacts with and stabilizes bases of the 16S rRNA that are involved in tRNA selection in the A site and with the mRNA backbone. Located at the interface of the 30S and 50S subunits, it traverses the body of the 30S subunit contacting proteins on the other side and probably holding the rRNA structure together. The combined cluster of proteins S8, S12 and S17 appears to hold together the shoulder and platform of the 30S subunit. In Bordetella petrii (strain ATCC BAA-461 / DSM 12804 / CCUG 43448), this protein is Small ribosomal subunit protein uS12.